The chain runs to 224 residues: Virulence transcriptional regulatory protein PhoP (224 aa).

In terms of domain architecture, Response regulatory spans 3 to 117 (RVLVVEDNAL…EVMARMQALM (115 aa)). Asp-52 is subject to 4-aspartylphosphate. Residues 125–223 (SQVINIPPFQ…VRGQGYLFEL (99 aa)) constitute a DNA-binding region (ompR/PhoB-type).

As to quaternary structure, monomer in the inactive, unphosphorylated state and dimer in the active, phosphorylated state. Phosphorylated by PhoQ.

It is found in the cytoplasm. In terms of biological role, member of the two-component regulatory system PhoP/PhoQ which regulates the expression of genes involved in virulence, adaptation to acidic and low Mg(2+) environments and resistance to host defense antimicrobial peptides. Essential for intramacrophage survival of S.typhimurium. In low periplasmic Mg(2+), PhoQ phosphorylates PhoP, resulting in the expression of PhoP-activated genes (PAG) and repression of PhoP-repressed genes (PRG). In high periplasmic Mg(2+), PhoQ dephosphorylates phospho-PhoP, resulting in the repression of PAG and may lead to expression of some PRG. Essential for transcription of spiC inside macrophages by controlling the expression of the two-component regulatory system SsrB/SpiR (SsrA) and Pir at transcriptional and post-transcriptional levels respectively. Promotes expression of the two-component regulatory system PmrA/PmrB via activation of pmrD gene. Is required to attenuate bacterial growth within fibroblast cells and to enhance bacterial resistance to bile in intestinal cells. Negatively regulates prgH, which is required for invasion of epithelial cells. PhoP uses multiple mechanisms to promote transcription and activates promoters for PAG at low (uM range) Mg(2+) concentrations. Involved in acid tolerance. This chain is Virulence transcriptional regulatory protein PhoP (phoP), found in Salmonella typhimurium (strain SL1344).